The primary structure comprises 818 residues: Exchange factor for Arf-6 (818 aa).

Disordered stretches follow at residues 92–123 (AQKL…ESSP), 137–168 (MEST…ENDD), 208–291 (NHHH…GVSN), and 326–383 (RTTP…VGGE). Basic and acidic residues predominate over residues 107–119 (IERRGSLARKTSE). Acidic residues predominate over residues 140–149 (TDVEESEEET). A compositionally biased stretch (basic and acidic residues) spans 154–165 (TDEKENQKKPNE). Polar residues-rich tracts occupy residues 213-223 (YNSSPQISTLS) and 255-269 (MSNN…SPEN). Low complexity predominate over residues 326-347 (RTTPNTAASNSSASASPSLHAT). The SEC7 domain occupies 356 to 532 (GVSLRSAESS…KTLFQSIKDN (177 aa)). Residues 361–380 (SAESSNLNQTAVPSTSTNSV) are compositionally biased toward polar residues. One can recognise a PH domain in the interval 569 to 681 (VEYYSGFLMR…WCEKINFVAA (113 aa)). Polar residues predominate over residues 782 to 799 (TMNIMMTPTRRQQQNQKP). The interval 782 to 818 (TMNIMMTPTRRQQQNQKPVVSEDRLSYTDAVNGAAAH) is disordered.

Interacts (via short N-terminal region) with microtubule-associated proteins tac-1 and zyg-8.

The protein localises to the cytoplasm. It localises to the cell cortex. Its subcellular location is the cell membrane. Functionally, guanine nucleotide exchange factor for arf-6. Involved in response to injury in mechanosensory neurons. Inhibits axon regrowth via microtubule dynamics, possibly by inducing axonal microtubule catastrophes. Limits microtubule growth near the cellular cortex of early embryonic cells. This Caenorhabditis elegans protein is Exchange factor for Arf-6.